A 111-amino-acid chain; its full sequence is CRIB domain-containing protein RIC2 (111 aa).

The CRIB domain maps to 71 to 84 (IGFPTDVKHLSHIG).

Interacts with ARAC11/ROP1. In terms of tissue distribution, expressed in roots, leaves, stems, flowers, siliques and pollen.

It is found in the cell membrane. Functionally, functions as a downstream effector of Rho-related GTP binding proteins of the 'Rho of Plants' (ROPs) family. Participates in the propagation of ROP GTPase signals in specific cellular responses. Is involved in pollen tube growth regulation through its interaction with ARAC11/ROP1. This is CRIB domain-containing protein RIC2 (RIC2) from Arabidopsis thaliana (Mouse-ear cress).